Here is a 173-residue protein sequence, read N- to C-terminus: Probable lipoprotein EnvE (173 aa).

An N-terminal signal peptide occupies residues 1–20; it reads MTLLSGKTTLVLCLSSILCG. Residue cysteine 21 is the site of N-palmitoyl cysteine attachment. Cysteine 21 is lipidated: S-diacylglycerol cysteine.

The protein localises to the cell membrane. This chain is Probable lipoprotein EnvE (envE), found in Salmonella typhimurium (strain LT2 / SGSC1412 / ATCC 700720).